A 119-amino-acid polypeptide reads, in one-letter code: Beta-2-microglobulin (119 aa).

The signal sequence occupies residues 1 to 20 (MARSVAVVFLMLLSVVCLDA). One can recognise an Ig-like C1-type domain in the interval 25–114 (PQVQVYTRHP…TTLKEPKVVT (90 aa)). A disulfide bond links Cys45 and Cys100.

The protein belongs to the beta-2-microglobulin family. Heterodimer of an alpha chain and a beta chain. Beta-2-microglobulin is the beta-chain of major histocompatibility complex class I molecules.

Its subcellular location is the secreted. Its function is as follows. Component of the class I major histocompatibility complex (MHC). Involved in the presentation of peptide antigens to the immune system. This is Beta-2-microglobulin (B2M) from Cricetulus griseus (Chinese hamster).